The sequence spans 61 residues: DNA-directed RNA polymerase subunit Rpo6 (61 aa).

This sequence belongs to the archaeal Rpo6/eukaryotic RPB6 RNA polymerase subunit family. Part of the RNA polymerase complex.

The protein resides in the cytoplasm. The catalysed reaction is RNA(n) + a ribonucleoside 5'-triphosphate = RNA(n+1) + diphosphate. DNA-dependent RNA polymerase (RNAP) catalyzes the transcription of DNA into RNA using the four ribonucleoside triphosphates as substrates. This Methanothermobacter thermautotrophicus (strain ATCC 29096 / DSM 1053 / JCM 10044 / NBRC 100330 / Delta H) (Methanobacterium thermoautotrophicum) protein is DNA-directed RNA polymerase subunit Rpo6.